The following is an 85-amino-acid chain: Beta-defensin 18 (85 aa).

Positions 1–23 (MQSTMKMFGIILMVIFSVSCGPS) are cleaved as a signal peptide. 3 cysteine pairs are disulfide-bonded: Cys39/Cys65, Cys46/Cys60, and Cys50/Cys66.

It belongs to the beta-defensin family.

It localises to the secreted. Has antibacterial activity. This is Beta-defensin 18 (Defb18) from Mus musculus (Mouse).